A 533-amino-acid polypeptide reads, in one-letter code: 1-aminocyclopropane-1-carboxylate synthase 5 (533 aa).

Lys-358 bears the N6-(pyridoxal phosphate)lysine mark.

The protein belongs to the class-I pyridoxal-phosphate-dependent aminotransferase family. Pyridoxal 5'-phosphate is required as a cofactor. In terms of tissue distribution, expressed in shoots and leaf blades. Expressed at low levels in leaf sheaths. Expressed in vasculature of roots and shoots.

The enzyme catalyses S-adenosyl-L-methionine = 1-aminocyclopropane-1-carboxylate + S-methyl-5'-thioadenosine + H(+). It participates in alkene biosynthesis; ethylene biosynthesis via S-adenosyl-L-methionine; ethylene from S-adenosyl-L-methionine: step 1/2. Catalyzes the formation of 1-aminocyclopropane-1-carboxylate, a direct precursor of ethylene in higher plants. This chain is 1-aminocyclopropane-1-carboxylate synthase 5, found in Oryza sativa subsp. japonica (Rice).